The chain runs to 442 residues: ATP-dependent RNA helicase SUB2 (442 aa).

Residues 59-87 carry the Q motif motif; sequence TGFRDFLLKPELLRAISDLGFEHPSEVQQ. Positions 90–265 constitute a Helicase ATP-binding domain; sequence IPQAILGTDV…KKFMQSPLEI (176 aa). 103-110 is an ATP binding site; sequence AKSGMGKT. Residues 212 to 215 carry the DECD box motif; that stretch reads DECD. The region spanning 277–438 is the Helicase C-terminal domain; sequence GLQQFYLKLE…TLPETVDPAT (162 aa).

It belongs to the DEAD box helicase family. DECD subfamily.

Its subcellular location is the nucleus. It carries out the reaction ATP + H2O = ADP + phosphate + H(+). Functionally, ATP-binding RNA helicase involved in transcription elongation and required for the export of mRNA out of the nucleus. SUB2 also plays a role in pre-mRNA splicing and spliceosome assembly. May be involved in rDNA and telomeric silencing, and maintenance of genome integrity. In Cryptococcus neoformans var. neoformans serotype D (strain JEC21 / ATCC MYA-565) (Filobasidiella neoformans), this protein is ATP-dependent RNA helicase SUB2 (SUB2).